The primary structure comprises 437 residues: Mitochondrial distribution and morphology protein 12 (437 aa).

The region spanning Met1 to Ile437 is the SMP-LTD domain. A compositionally biased stretch (acidic residues) spans Asp73 to Leu85. Disordered regions lie at residues Asp73 to Asn101, Ser187 to Met274, and Ser354 to Gly384. Residues Ser91 to Asn101 are compositionally biased toward basic and acidic residues. Polar residues-rich tracts occupy residues Asp215–Asn240 and Ala371–Arg381.

Belongs to the MDM12 family. In terms of assembly, component of the ER-mitochondria encounter structure (ERMES) or MDM complex, composed of mmm1, mdm10, mdm12 and mdm34. A mmm1 homodimer associates with one molecule of mdm12 on each side in a pairwise head-to-tail manner, and the SMP-LTD domains of mmm1 and mdm12 generate a continuous hydrophobic tunnel for phospholipid trafficking.

The protein resides in the mitochondrion outer membrane. It localises to the endoplasmic reticulum membrane. Its function is as follows. Component of the ERMES/MDM complex, which serves as a molecular tether to connect the endoplasmic reticulum (ER) and mitochondria. Components of this complex are involved in the control of mitochondrial shape and protein biogenesis, and function in nonvesicular lipid trafficking between the ER and mitochondria. Mdm12 is required for the interaction of the ER-resident membrane protein mmm1 and the outer mitochondrial membrane-resident beta-barrel protein mdm10. The mdm12-mmm1 subcomplex functions in the major beta-barrel assembly pathway that is responsible for biogenesis of all mitochondrial outer membrane beta-barrel proteins, and acts in a late step after the SAM complex. The mdm10-mdm12-mmm1 subcomplex further acts in the TOM40-specific pathway after the action of the mdm12-mmm1 complex. Essential for establishing and maintaining the structure of mitochondria and maintenance of mtDNA nucleoids. This is Mitochondrial distribution and morphology protein 12 from Aspergillus clavatus (strain ATCC 1007 / CBS 513.65 / DSM 816 / NCTC 3887 / NRRL 1 / QM 1276 / 107).